Here is a 342-residue protein sequence, read N- to C-terminus: Flagellar P-ring protein (342 aa).

A signal peptide spans 1 to 19 (MKRVFLWLIFVLAFHKLLA).

This sequence belongs to the FlgI family. The basal body constitutes a major portion of the flagellar organelle and consists of four rings (L,P,S, and M) mounted on a central rod.

Its subcellular location is the periplasm. The protein localises to the bacterial flagellum basal body. Its function is as follows. Assembles around the rod to form the L-ring and probably protects the motor/basal body from shearing forces during rotation. The sequence is that of Flagellar P-ring protein from Helicobacter pylori (strain P12).